The primary structure comprises 353 residues: Ferredoxin--NADP reductase 1 (353 aa).

FAD is bound by residues Asp-43, Gln-51, Tyr-56, Ala-96, Phe-135, Asp-300, and Ser-341.

The protein belongs to the ferredoxin--NADP reductase type 2 family. In terms of assembly, homodimer. The cofactor is FAD.

The catalysed reaction is 2 reduced [2Fe-2S]-[ferredoxin] + NADP(+) + H(+) = 2 oxidized [2Fe-2S]-[ferredoxin] + NADPH. The chain is Ferredoxin--NADP reductase 1 from Cupriavidus metallidurans (strain ATCC 43123 / DSM 2839 / NBRC 102507 / CH34) (Ralstonia metallidurans).